A 137-amino-acid chain; its full sequence is NTF2-related export protein (137 aa).

In terms of domain architecture, NTF2 spans 19-135; the sequence is ESKKFMDVYY…YKVKSDRFRY (117 aa).

As to quaternary structure, preferentially binds Ran-GTP.

It is found in the nucleus. In terms of biological role, stimulator of protein export for NES-containing proteins. Also plays a role in the nuclear export of U1 snRNA, tRNA, and mRNA. In Caenorhabditis elegans, this protein is NTF2-related export protein (nxt-1).